Here is a 187-residue protein sequence, read N- to C-terminus: Dihydrofolate reductase type A10 (187 aa).

Residues Asn2 to Arg174 form the DHFR domain.

This sequence belongs to the dihydrofolate reductase family. Homodimer.

It catalyses the reaction (6S)-5,6,7,8-tetrahydrofolate + NADP(+) = 7,8-dihydrofolate + NADPH + H(+). Its pathway is cofactor biosynthesis; tetrahydrofolate biosynthesis; 5,6,7,8-tetrahydrofolate from 7,8-dihydrofolate: step 1/1. Key enzyme in folate metabolism. Catalyzes an essential reaction for de novo glycine and purine synthesis, and for DNA precursor synthesis. This Escherichia coli protein is Dihydrofolate reductase type A10 (dfrA10).